The chain runs to 204 residues: Holliday junction branch migration complex subunit RuvA (204 aa).

Residues 1-64 (MIGRLRGIIL…EDAQLLYGFN (64 aa)) form a domain I region. The interval 65 to 142 (NKQERALFRE…KGLNGDLFNN (78 aa)) is domain II. Residues 143-155 (TGDISLPTASPQT) are flexible linker. Residues 156–204 (SDADIEAEAASALVALGYKPQEASRLVSKIAKPGADCETLIRDALRAAL) are domain III.

Belongs to the RuvA family. In terms of assembly, homotetramer. Forms an RuvA(8)-RuvB(12)-Holliday junction (HJ) complex. HJ DNA is sandwiched between 2 RuvA tetramers; dsDNA enters through RuvA and exits via RuvB. An RuvB hexamer assembles on each DNA strand where it exits the tetramer. Each RuvB hexamer is contacted by two RuvA subunits (via domain III) on 2 adjacent RuvB subunits; this complex drives branch migration. In the full resolvosome a probable DNA-RuvA(4)-RuvB(12)-RuvC(2) complex forms which resolves the HJ.

It localises to the cytoplasm. Its function is as follows. The RuvA-RuvB-RuvC complex processes Holliday junction (HJ) DNA during genetic recombination and DNA repair, while the RuvA-RuvB complex plays an important role in the rescue of blocked DNA replication forks via replication fork reversal (RFR). RuvA specifically binds to HJ cruciform DNA, conferring on it an open structure. The RuvB hexamer acts as an ATP-dependent pump, pulling dsDNA into and through the RuvAB complex. HJ branch migration allows RuvC to scan DNA until it finds its consensus sequence, where it cleaves and resolves the cruciform DNA. This is Holliday junction branch migration complex subunit RuvA from Yersinia pseudotuberculosis serotype O:1b (strain IP 31758).